A 331-amino-acid polypeptide reads, in one-letter code: Cathepsin S (331 aa).

An N-terminal signal peptide occupies residues 1–16 (MKWLVGLLPLCSYAVA). Positions 17–114 (QVHKDPTLDH…VTYRSNSNQK (98 aa)) are cleaved as a propeptide — activation peptide. Residue asparagine 104 is glycosylated (N-linked (GlcNAc...) asparagine). 4 cysteine pairs are disulfide-bonded: cysteine 126–cysteine 224, cysteine 136–cysteine 180, cysteine 170–cysteine 213, and cysteine 272–cysteine 320. Cysteine 139 is an active-site residue. Catalysis depends on residues histidine 278 and asparagine 298.

Belongs to the peptidase C1 family.

Its subcellular location is the lysosome. It localises to the secreted. The protein resides in the cytoplasmic vesicle. It is found in the phagosome. It carries out the reaction Similar to cathepsin L, but with much less activity on Z-Phe-Arg-|-NHMec, and more activity on the Z-Val-Val-Arg-|-Xaa compound.. Its function is as follows. Thiol protease. Key protease responsible for the removal of the invariant chain from MHC class II molecules and MHC class II antigen presentation. The bond-specificity of this proteinase is in part similar to the specificities of cathepsin L. This is Cathepsin S (CTSS) from Canis lupus familiaris (Dog).